The sequence spans 848 residues: DNA-binding protein RFX6 (848 aa).

A DNA-binding region (RFX-type winged-helix) is located at residues T56 to E131.

It belongs to the RFX family. In terms of tissue distribution, expressed in progenitors and hormone expressing cells of the islet lineage.

The protein resides in the nucleus. Transcription factor required to direct islet cell differentiation during endocrine pancreas development. This is DNA-binding protein RFX6 (rfx6) from Danio rerio (Zebrafish).